The chain runs to 101 residues: Large ribosomal subunit protein uL23 (101 aa).

Belongs to the universal ribosomal protein uL23 family. Part of the 50S ribosomal subunit. Contacts protein L29, and trigger factor when it is bound to the ribosome.

In terms of biological role, one of the early assembly proteins it binds 23S rRNA. One of the proteins that surrounds the polypeptide exit tunnel on the outside of the ribosome. Forms the main docking site for trigger factor binding to the ribosome. The polypeptide is Large ribosomal subunit protein uL23 (Pseudarthrobacter chlorophenolicus (strain ATCC 700700 / DSM 12829 / CIP 107037 / JCM 12360 / KCTC 9906 / NCIMB 13794 / A6) (Arthrobacter chlorophenolicus)).